The sequence spans 134 residues: Large ribosomal subunit protein eL28 (134 aa).

S60 carries the post-translational modification Phosphoserine.

It belongs to the eukaryotic ribosomal protein eL28 family. As to quaternary structure, component of the large ribosomal subunit (LSU). Mature yeast ribosomes consist of a small (40S) and a large (60S) subunit. The 40S small subunit contains 1 molecule of ribosomal RNA (18S rRNA) and at least 33 different proteins. The large 60S subunit contains 3 rRNA molecules (25S, 5.8S and 5S rRNA) and at least 46 different proteins.

It is found in the cytoplasm. In terms of biological role, component of the ribosome, a large ribonucleoprotein complex responsible for the synthesis of proteins in the cell. The small ribosomal subunit (SSU) binds messenger RNAs (mRNAs) and translates the encoded message by selecting cognate aminoacyl-transfer RNA (tRNA) molecules. The large subunit (LSU) contains the ribosomal catalytic site termed the peptidyl transferase center (PTC), which catalyzes the formation of peptide bonds, thereby polymerizing the amino acids delivered by tRNAs into a polypeptide chain. The nascent polypeptides leave the ribosome through a tunnel in the LSU and interact with protein factors that function in enzymatic processing, targeting, and the membrane insertion of nascent chains at the exit of the ribosomal tunnel. The chain is Large ribosomal subunit protein eL28 (rpl44) from Schizosaccharomyces pombe (strain 972 / ATCC 24843) (Fission yeast).